The following is a 248-amino-acid chain: Probable transcriptional regulatory protein BBta_6910 (248 aa).

It belongs to the TACO1 family.

The protein localises to the cytoplasm. The sequence is that of Probable transcriptional regulatory protein BBta_6910 from Bradyrhizobium sp. (strain BTAi1 / ATCC BAA-1182).